The following is a 463-amino-acid chain: Chromosomal replication initiator protein DnaA (463 aa).

A domain I, interacts with DnaA modulators region spans residues 1 to 83 (MSTNQIILTD…LQLFQHYNNT (83 aa)). A domain II region spans residues 83-124 (TIKSIEIITKELPGTTQTVTELPTKTFADIGSSELNSENIFS). Positions 125–343 (TLDARFTFDN…GALNKVIAHS (219 aa)) are domain III, AAA+ region. The ATP site is built by Gly171, Gly173, Lys174, and Thr175. A domain IV, binds dsDNA region spans residues 344 to 463 (NFTLKEITLE…INLLMKILQN (120 aa)).

The protein belongs to the DnaA family. As to quaternary structure, oligomerizes as a right-handed, spiral filament on DNA at oriC.

It is found in the cytoplasm. Functionally, plays an essential role in the initiation and regulation of chromosomal replication. ATP-DnaA binds to the origin of replication (oriC) to initiate formation of the DNA replication initiation complex once per cell cycle. Binds the DnaA box (a 9 base pair repeat at the origin) and separates the double-stranded (ds)DNA. Forms a right-handed helical filament on oriC DNA; dsDNA binds to the exterior of the filament while single-stranded (ss)DNA is stabiized in the filament's interior. The ATP-DnaA-oriC complex binds and stabilizes one strand of the AT-rich DNA unwinding element (DUE), permitting loading of DNA polymerase. After initiation quickly degrades to an ADP-DnaA complex that is not apt for DNA replication. Binds acidic phospholipids. The chain is Chromosomal replication initiator protein DnaA from Rickettsia peacockii (strain Rustic).